The following is a 178-amino-acid chain: Twist-related protein (178 aa).

The bHLH domain maps to 20 to 71 (QQRACANRRERQRTKELNDAFTLLRKLIPSMPSDKMSKIHTLRIATDYISFL).

As to quaternary structure, efficient DNA binding requires dimerization with another bHLH protein. Homodimer. Forms a heterodimer with hlh-2. Expressed in defecation-associated muscles and neuron-like cells in the head at the L1 stage. In later larvae, expressed in SM cells and their descendants. Not expressed in differentiated body wall or sex muscles.

It localises to the nucleus. In terms of biological role, acts as a transcriptional regulator. Involved in postembryonic mesodermal cell fate specification. Activates ceh-24 and egl-15 during mesodermal patterning. The chain is Twist-related protein (hlh-8) from Caenorhabditis elegans.